The following is a 468-amino-acid chain: Siroheme synthase 1 (468 aa).

Positions 1–204 (MDYLPIFCRL…GDKASANQLA (204 aa)) are precorrin-2 dehydrogenase /sirohydrochlorin ferrochelatase. NAD(+) is bound by residues 22–23 (EV) and 43–44 (PA). A Phosphoserine modification is found at Ser-128. A uroporphyrinogen-III C-methyltransferase region spans residues 216–468 (GEVILVGAGP…NHGVQAAALA (253 aa)). Pro-225 contributes to the S-adenosyl-L-methionine binding site. Asp-248 (proton acceptor) is an active-site residue. The Proton donor role is filled by Lys-270. S-adenosyl-L-methionine contacts are provided by residues 301–303 (GGD), Ile-306, 331–332 (TA), Met-383, and Gly-412.

It in the N-terminal section; belongs to the precorrin-2 dehydrogenase / sirohydrochlorin ferrochelatase family. The protein in the C-terminal section; belongs to the precorrin methyltransferase family.

It carries out the reaction uroporphyrinogen III + 2 S-adenosyl-L-methionine = precorrin-2 + 2 S-adenosyl-L-homocysteine + H(+). The catalysed reaction is precorrin-2 + NAD(+) = sirohydrochlorin + NADH + 2 H(+). It catalyses the reaction siroheme + 2 H(+) = sirohydrochlorin + Fe(2+). It participates in cofactor biosynthesis; adenosylcobalamin biosynthesis; precorrin-2 from uroporphyrinogen III: step 1/1. Its pathway is cofactor biosynthesis; adenosylcobalamin biosynthesis; sirohydrochlorin from precorrin-2: step 1/1. It functions in the pathway porphyrin-containing compound metabolism; siroheme biosynthesis; precorrin-2 from uroporphyrinogen III: step 1/1. The protein operates within porphyrin-containing compound metabolism; siroheme biosynthesis; siroheme from sirohydrochlorin: step 1/1. It participates in porphyrin-containing compound metabolism; siroheme biosynthesis; sirohydrochlorin from precorrin-2: step 1/1. Its function is as follows. Multifunctional enzyme that catalyzes the SAM-dependent methylations of uroporphyrinogen III at position C-2 and C-7 to form precorrin-2 via precorrin-1. Then it catalyzes the NAD-dependent ring dehydrogenation of precorrin-2 to yield sirohydrochlorin. Finally, it catalyzes the ferrochelation of sirohydrochlorin to yield siroheme. The chain is Siroheme synthase 1 from Aeromonas salmonicida (strain A449).